The following is a 240-amino-acid chain: 2,3,4,5-tetrahydropyridine-2,6-dicarboxylate N-acetyltransferase (240 aa).

Belongs to the transferase hexapeptide repeat family. DapH subfamily.

The catalysed reaction is (S)-2,3,4,5-tetrahydrodipicolinate + acetyl-CoA + H2O = L-2-acetamido-6-oxoheptanedioate + CoA. It functions in the pathway amino-acid biosynthesis; L-lysine biosynthesis via DAP pathway; LL-2,6-diaminopimelate from (S)-tetrahydrodipicolinate (acetylase route): step 1/3. Catalyzes the transfer of an acetyl group from acetyl-CoA to tetrahydrodipicolinate. The protein is 2,3,4,5-tetrahydropyridine-2,6-dicarboxylate N-acetyltransferase of Bacillus cereus (strain AH187).